Reading from the N-terminus, the 309-residue chain is tRNA pseudouridine synthase B (309 aa).

Asp-39 (nucleophile) is an active-site residue.

This sequence belongs to the pseudouridine synthase TruB family. Type 1 subfamily.

The enzyme catalyses uridine(55) in tRNA = pseudouridine(55) in tRNA. In terms of biological role, responsible for synthesis of pseudouridine from uracil-55 in the psi GC loop of transfer RNAs. This is tRNA pseudouridine synthase B from Bacillus subtilis (strain 168).